Reading from the N-terminus, the 141-residue chain is Large ribosomal subunit protein uL11 (141 aa).

This sequence belongs to the universal ribosomal protein uL11 family. In terms of assembly, part of the ribosomal stalk of the 50S ribosomal subunit. Interacts with L10 and the large rRNA to form the base of the stalk. L10 forms an elongated spine to which L12 dimers bind in a sequential fashion forming a multimeric L10(L12)X complex. One or more lysine residues are methylated.

In terms of biological role, forms part of the ribosomal stalk which helps the ribosome interact with GTP-bound translation factors. This Chlorobium phaeobacteroides (strain BS1) protein is Large ribosomal subunit protein uL11.